A 129-amino-acid chain; its full sequence is Small ribosomal subunit protein uS11 (129 aa).

Belongs to the universal ribosomal protein uS11 family. In terms of assembly, part of the 30S ribosomal subunit. Interacts with proteins S7 and S18. Binds to IF-3.

Its function is as follows. Located on the platform of the 30S subunit, it bridges several disparate RNA helices of the 16S rRNA. Forms part of the Shine-Dalgarno cleft in the 70S ribosome. The sequence is that of Small ribosomal subunit protein uS11 from Lactobacillus gasseri (strain ATCC 33323 / DSM 20243 / BCRC 14619 / CIP 102991 / JCM 1131 / KCTC 3163 / NCIMB 11718 / NCTC 13722 / AM63).